We begin with the raw amino-acid sequence, 175 residues long: Disulfide bond formation protein B (175 aa).

At 1-13 (MVSNWLDAAPRRV) the chain is on the cytoplasmic side. Residues 14-30 (LALISAACIAMLAFGMY) form a helical membrane-spanning segment. Topologically, residues 31-48 (LQHVVGLEPCPMCIVQRY) are periplasmic. Cysteines 40 and 43 form a disulfide. The helical transmembrane segment at 49–65 (ALIGVAVFTGLGSLRGG) threads the bilayer. Residues 66-70 (RGWWM) lie on the Cytoplasmic side of the membrane. The chain crosses the membrane as a helical span at residues 71 to 88 (TWGVLALLLSGFGAFVAA). The Periplasmic segment spans residues 89 to 144 (RQSWLQWYPPEIATCGRDFYGMIENFPISRAIPMIFRGSGDCAAIDWTFLGGSIAN). An intrachain disulfide couples C103 to C130. The chain crosses the membrane as a helical span at residues 145 to 163 (WSFVCFVVMALVLLVMLLR). The Cytoplasmic segment spans residues 164 to 175 (APRPARGGFSAA).

It belongs to the DsbB family.

It localises to the cell inner membrane. Required for disulfide bond formation in some periplasmic proteins. Acts by oxidizing the DsbA protein. This is Disulfide bond formation protein B from Paracidovorax citrulli (strain AAC00-1) (Acidovorax citrulli).